The sequence spans 62 residues: Large ribosomal subunit protein bL28 (62 aa).

The interval 1-28 (MARKCVITGRKSRSGNSRSHAMNASKRT) is disordered. A compositionally biased stretch (polar residues) spans 14-26 (SGNSRSHAMNASK).

Belongs to the bacterial ribosomal protein bL28 family.

In Bacillus licheniformis (strain ATCC 14580 / DSM 13 / JCM 2505 / CCUG 7422 / NBRC 12200 / NCIMB 9375 / NCTC 10341 / NRRL NRS-1264 / Gibson 46), this protein is Large ribosomal subunit protein bL28.